The chain runs to 312 residues: Ribonuclease Z (312 aa).

Residues His63, His65, Asp67, His68, His140, Asp211, and His269 each coordinate Zn(2+). Asp67 serves as the catalytic Proton acceptor.

Belongs to the RNase Z family. Homodimer. The cofactor is Zn(2+).

The enzyme catalyses Endonucleolytic cleavage of RNA, removing extra 3' nucleotides from tRNA precursor, generating 3' termini of tRNAs. A 3'-hydroxy group is left at the tRNA terminus and a 5'-phosphoryl group is left at the trailer molecule.. Its function is as follows. Zinc phosphodiesterase, which displays some tRNA 3'-processing endonuclease activity. Probably involved in tRNA maturation, by removing a 3'-trailer from precursor tRNA. This is Ribonuclease Z from Shouchella clausii (strain KSM-K16) (Alkalihalobacillus clausii).